The chain runs to 490 residues: Glutamate--tRNA ligase (490 aa).

The 'HIGH' region signature appears at 13–23; the sequence is PSPTGTPHVGL. The 'KMSKS' region signature appears at 257–261; it reads KLSKR. Residue lysine 260 coordinates ATP.

It belongs to the class-I aminoacyl-tRNA synthetase family. Glutamate--tRNA ligase type 1 subfamily. Monomer.

It is found in the cytoplasm. It carries out the reaction tRNA(Glu) + L-glutamate + ATP = L-glutamyl-tRNA(Glu) + AMP + diphosphate. Functionally, catalyzes the attachment of glutamate to tRNA(Glu) in a two-step reaction: glutamate is first activated by ATP to form Glu-AMP and then transferred to the acceptor end of tRNA(Glu). The protein is Glutamate--tRNA ligase of Mycobacterium tuberculosis (strain ATCC 25177 / H37Ra).